The sequence spans 314 residues: Glucocorticoid receptor (314 aa).

A disordered region spans residues 1-44 (ASAAVSAAPTEKEFPKTHSDVSSEQQNLKGQKGSNGGSMKLHTT). The segment at 1-281 (ASAAVSAAPT…SAATGPPPKL (281 aa)) is modulating. Residues 10 to 21 (TEKEFPKTHSDV) show a composition bias toward basic and acidic residues. Residues Ser-65, Ser-73, and Ser-88 each carry the phosphoserine modification. Residue Lys-120 forms a Glycyl lysine isopeptide (Lys-Gly) (interchain with G-Cter in SUMO2) linkage. Position 129 is a phosphoserine (Ser-129). Residues Lys-139 and Lys-155 each participate in a glycyl lysine isopeptide (Lys-Gly) (interchain with G-Cter in SUMO); alternate cross-link. Glycyl lysine isopeptide (Lys-Gly) (interchain with G-Cter in SUMO2); alternate cross-links involve residues Lys-139 and Lys-155. The residue at position 266 (Ser-266) is a Phosphoserine. A Glycyl lysine isopeptide (Lys-Gly) (interchain with G-Cter in ubiquitin) cross-link involves residue Lys-280. Residues 282–314 (CLVCSDEASGCHYGVLTCGSCKVFFKRAVEGQH) form an NR C4-type zinc finger. Positions 282 to 314 (CLVCSDEASGCHYGVLTCGSCKVFFKRAVEGQH) form a DNA-binding region, nuclear receptor.

It belongs to the nuclear hormone receptor family. NR3 subfamily. In terms of assembly, heteromultimeric cytoplasmic complex with HSP90AA1, HSPA1A/HSPA1B, and FKBP5 or another immunophilin such as PPID, STIP1, or the immunophilin homolog PPP5C. Upon ligand binding FKBP5 dissociates from the complex and FKBP4 takes its place, thereby linking the complex to dynein and mediating transport to the nucleus, where the complex dissociates. Probably forms a complex composed of chaperones HSP90 and HSP70, co-chaperones CDC37, PPP5C, TSC1 and client protein TSC2, CDK4, AKT, RAF1 and NR3C1; this complex does not contain co-chaperones STIP1/HOP and PTGES3/p23. Directly interacts with UNC45A. Binds to DNA as a homodimer, and as heterodimer with NR3C2 or the retinoid X receptor. Binds STAT5A and STAT5B homodimers and heterodimers. Interacts with NRIP1, POU2F1, POU2F2 and TRIM28. Interacts with several coactivator complexes, including the SMARCA4 complex, CREBBP/EP300, TADA2L (Ada complex) and p160 coactivators such as NCOA2 and NCOA6. Interaction with BAG1 inhibits transactivation. Interacts with HEXIM1 and TGFB1I1. Interacts with NCOA1. Interacts with NCOA3, SMARCA4, SMARCC1, SMARCD1, and SMARCE1. Interacts with CLOCK, CRY1 and CRY2 in a ligand-dependent fashion. Interacts with CIART. Interacts with RWDD3. Interacts with UBE2I/UBC9 and this interaction is enhanced in the presence of RWDD3. Interacts with GRIP1. Interacts with NR4A3 (via nuclear receptor DNA-binding domain), represses transcription activity of NR4A3 on the POMC promoter Nur response element (NurRE). Directly interacts with PNRC2 to attract and form a complex with UPF1 and DCP1A; the interaction leads to rapid mRNA degradation. Interacts with GSK3B. Interacts with FNIP1 and FNIP2. Interacts (via C-terminus) with HNRNPU (via C-terminus). Interacts with MCM3AP. Interacts (via domain NR LBD) with HSP90AA1 and HSP90AB1. In the absence of hormonal ligand, interacts with TACC1. Interacts (via NR LBD domain) with ZNF764 (via KRAB domain); the interaction regulates transcription factor activity of NR3C1 by directing its actions toward certain biologic pathways. In terms of processing, acetylation by CLOCK reduces its binding to glucocorticoid response elements and its transcriptional activity. Increased proteasome-mediated degradation in response to glucocorticoids. Post-translationally, phosphorylated in the absence of hormone; becomes hyperphosphorylated in the presence of glucocorticoid. The Ser-65, Ser-88 and Ser-266-phosphorylated forms are mainly cytoplasmic, and the Ser-73-phosphorylated form is nuclear. Phosphorylation at Ser-73 increases transcriptional activity. Phosphorylation at Ser-65, Ser-88 and Ser-266 decreases signaling capacity. Phosphorylation at Ser-266 may protect from glucocorticoid-induced apoptosis. Phosphorylation at Ser-65 and Ser-73 is not required in regulation of chromosome segregation. May be dephosphorylated by PPP5C, attenuates NR3C1 action. In terms of processing, ubiquitinated by UBR5, leading to its degradation: UBR5 specifically recognizes and binds ligand-bound NR3C1 when it is not associated with coactivators (NCOAs). In presence of NCOAs, the UBR5-degron is not accessible, preventing its ubiquitination and degradation. Sumoylation at Lys-139 and Lys-155 negatively regulates its transcriptional activity. Heat shock increases sumoylation in a RWDD3-dependent manner.

The protein localises to the cytoplasm. It localises to the nucleus. The protein resides in the mitochondrion. Its subcellular location is the cytoskeleton. It is found in the spindle. The protein localises to the microtubule organizing center. It localises to the centrosome. The protein resides in the chromosome. Its subcellular location is the nucleoplasm. Its function is as follows. Receptor for glucocorticoids (GC). Has a dual mode of action: as a transcription factor that binds to glucocorticoid response elements (GRE), both for nuclear and mitochondrial DNA, and as a modulator of other transcription factors. Affects inflammatory responses, cellular proliferation and differentiation in target tissues. Involved in chromatin remodeling. Plays a role in rapid mRNA degradation by binding to the 5' UTR of target mRNAs and interacting with PNRC2 in a ligand-dependent manner which recruits the RNA helicase UPF1 and the mRNA-decapping enzyme DCP1A, leading to RNA decay. Could act as a coactivator for STAT5-dependent transcription upon growth hormone (GH) stimulation and could reveal an essential role of hepatic GR in the control of body growth. Mediates glucocorticoid-induced apoptosis. Promotes accurate chromosome segregation during mitosis. May act as a tumor suppressor. May play a negative role in adipogenesis through the regulation of lipolytic and antilipogenic gene expression. In Ovis aries (Sheep), this protein is Glucocorticoid receptor (NR3C1).